The primary structure comprises 132 residues: Ragulator complex protein LAMTOR3 homolog (132 aa).

This sequence belongs to the LAMTOR3 family. As to quaternary structure, part of the Ragulator complex.

In terms of biological role, regulator of the TOR pathway, a signaling cascade that promotes cell growth in response to growth factors, energy levels, and amino acids. May activate the TOR signaling cascade in response to amino acids. The polypeptide is Ragulator complex protein LAMTOR3 homolog (Dictyostelium discoideum (Social amoeba)).